The chain runs to 145 residues: UPF0201 protein SSO1042 (145 aa).

Belongs to the UPF0201 family.

In Saccharolobus solfataricus (strain ATCC 35092 / DSM 1617 / JCM 11322 / P2) (Sulfolobus solfataricus), this protein is UPF0201 protein SSO1042.